Here is a 181-residue protein sequence, read N- to C-terminus: UPF0398 protein lin2003 (181 aa).

It belongs to the UPF0398 family.

This Listeria innocua serovar 6a (strain ATCC BAA-680 / CLIP 11262) protein is UPF0398 protein lin2003.